We begin with the raw amino-acid sequence, 246 residues long: Protein crossbronx (246 aa).

In terms of domain architecture, UBC core spans 20 to 177 (QQEYKILAEY…VQESILESKA (158 aa)).

This sequence belongs to the ubiquitin-conjugating enzyme family. FTS subfamily.

In Drosophila grimshawi (Hawaiian fruit fly), this protein is Protein crossbronx (cbx).